The primary structure comprises 498 residues: Neoxanthin synthase, chloroplastic (498 aa).

The N-terminal 42 residues, 1-42 (METLLKPFPSLLLSSPTPYRSIVQQNPSFLSPTTKKKSRKCL), are a transit peptide targeting the chloroplast.

The protein belongs to the lycopene cyclase family. Expressed exclusively in chromoplast-containing tissues of flowers and fruits. Expressed in preanthesis flowers.

It localises to the plastid. The protein resides in the chloroplast. The catalysed reaction is all-trans-violaxanthin = all-trans-neoxanthin. It carries out the reaction a carotenoid psi-end group = a carotenoid beta-end derivative. The protein operates within carotenoid biosynthesis; neoxanthin biosynthesis. Its pathway is carotenoid biosynthesis; beta-carotene biosynthesis. In terms of biological role, involved in the synthesis of neoxanthin, the last product of carotenoid synthesis and a precursor of abscisic acid. Involved in the beta-carotene biosynthesis. This is Neoxanthin synthase, chloroplastic from Solanum lycopersicum (Tomato).